The primary structure comprises 116 residues: Probable prefoldin subunit 2 (116 aa).

Belongs to the prefoldin subunit beta family. Heterohexamer of two PFD-alpha type and four PFD-beta type subunits.

In terms of biological role, binds specifically to cytosolic chaperonin (c-CPN) and transfers target proteins to it. Binds to nascent polypeptide chain and promotes folding in an environment in which there are many competing pathways for nonnative proteins. This Dictyostelium discoideum (Social amoeba) protein is Probable prefoldin subunit 2 (pfdn2).